Consider the following 245-residue polypeptide: Orotidine 5'-phosphate decarboxylase (245 aa).

Residues aspartate 22, lysine 44, 71 to 80 (DLKFHDIPNT), threonine 131, arginine 192, glutamine 201, glycine 221, and arginine 222 each bind substrate. Catalysis depends on lysine 73, which acts as the Proton donor.

This sequence belongs to the OMP decarboxylase family. Type 1 subfamily. As to quaternary structure, homodimer.

The enzyme catalyses orotidine 5'-phosphate + H(+) = UMP + CO2. It functions in the pathway pyrimidine metabolism; UMP biosynthesis via de novo pathway; UMP from orotate: step 2/2. In terms of biological role, catalyzes the decarboxylation of orotidine 5'-monophosphate (OMP) to uridine 5'-monophosphate (UMP). The protein is Orotidine 5'-phosphate decarboxylase of Salmonella newport (strain SL254).